The chain runs to 387 residues: Zn(2)-C6 fungal-type trascription factor aoiH (387 aa).

A DNA-binding region (zn(2)-C6 fungal-type) is located at residues Cys21–Cys48. Residues Val68–Gln87 are compositionally biased toward polar residues. Residues Val68 to Ile94 are disordered.

It is found in the nucleus. Functionally, transcription factor; part of the gene cluster that mediates the biosynthesis of a methylated derivative of known natural products orthosporin and diaporthin. Positively regultaes the expression of the non-reducing polyketide synthase aoiG and the O-methyltransferase aoiO. This chain is Zn(2)-C6 fungal-type trascription factor aoiH, found in Aspergillus oryzae (strain ATCC 42149 / RIB 40) (Yellow koji mold).